Reading from the N-terminus, the 211-residue chain is Calaxin (211 aa).

3 EF-hand domains span residues 64-99 (TDDMIMDRVFRGFDKDNDGCVNVLEWIHGLSLFLRG), 100-135 (SLEEKMKYCFEVFDLNGDGFISKEEMFHMLKNSLLK), and 145-180 (GIKDLVEITLKKMDHDHDGKLSFADYELAVREETLL). 14 residues coordinate Ca(2+): D77, D79, D81, C83, E88, D113, N115, D117, E124, D158, D160, D162, K164, and D169.

Component of the outer dynein arm-docking complex along with ODAD1, ODAD2, ODAD3 and ODAD4. As to expression, strong expression in the respiratory epithelium. Expressed in the sperm.

The protein resides in the cytoplasm. Its subcellular location is the cytoskeleton. The protein localises to the cilium axoneme. It is found in the cell projection. It localises to the cilium. The protein resides in the flagellum. Its function is as follows. Component of the outer dynein arm-docking complex (ODA-DC) that mediates outer dynein arms (ODA) binding onto the doublet microtubule. Seems to regulate the assembly of both ODAs and their axonemal docking complex onto ciliary microtubules. Regulates ciliary and flagellar motility and is required for cilia-driven determination of body laterality. This chain is Calaxin, found in Homo sapiens (Human).